A 162-amino-acid chain; its full sequence is Peptide methionine sulfoxide reductase MsrA (162 aa).

The active site involves C10.

This sequence belongs to the MsrA Met sulfoxide reductase family.

The catalysed reaction is L-methionyl-[protein] + [thioredoxin]-disulfide + H2O = L-methionyl-(S)-S-oxide-[protein] + [thioredoxin]-dithiol. The enzyme catalyses [thioredoxin]-disulfide + L-methionine + H2O = L-methionine (S)-S-oxide + [thioredoxin]-dithiol. Functionally, has an important function as a repair enzyme for proteins that have been inactivated by oxidation. Catalyzes the reversible oxidation-reduction of methionine sulfoxide in proteins to methionine. This chain is Peptide methionine sulfoxide reductase MsrA, found in Clostridium acetobutylicum (strain ATCC 824 / DSM 792 / JCM 1419 / IAM 19013 / LMG 5710 / NBRC 13948 / NRRL B-527 / VKM B-1787 / 2291 / W).